The chain runs to 861 residues: Benzylsuccinate synthase alpha subunit (861 aa).

One can recognise a PFL domain in the interval 40 to 712 (TERTRRLKAR…QAVGLYMEVG (673 aa)). The segment at 718–744 (TPDGRFGGEAADDGGISPYSGTDKKGP) is disordered. The Glycine radical domain occupies 731-850 (GGISPYSGTD…IIARNEQNFN (120 aa)). Gly825 is modified (glycine radical).

Belongs to the glycyl radical enzyme (GRE) family. BSS subfamily. Heterohexamer composed of 2 alpha subunits, 2 beta subunits and 2 gamma subunits.

It carries out the reaction toluene + fumarate = 2-benzylsuccinate. Its pathway is xenobiotic degradation; toluene degradation. Activated by the benzylsuccinate synthase activating enzyme BssD. Rapidly inactivated by oxygen. Functionally, catalyzes the addition of fumarate to the methyl group of toluene, leading to the formation of benzylsuccinate. In Thauera aromatica, this protein is Benzylsuccinate synthase alpha subunit (bssA).